A 347-amino-acid chain; its full sequence is S-adenosylmethionine:tRNA ribosyltransferase-isomerase (347 aa).

The protein belongs to the QueA family. As to quaternary structure, monomer.

Its subcellular location is the cytoplasm. It catalyses the reaction 7-aminomethyl-7-carbaguanosine(34) in tRNA + S-adenosyl-L-methionine = epoxyqueuosine(34) in tRNA + adenine + L-methionine + 2 H(+). It functions in the pathway tRNA modification; tRNA-queuosine biosynthesis. Functionally, transfers and isomerizes the ribose moiety from AdoMet to the 7-aminomethyl group of 7-deazaguanine (preQ1-tRNA) to give epoxyqueuosine (oQ-tRNA). This Erythrobacter litoralis (strain HTCC2594) protein is S-adenosylmethionine:tRNA ribosyltransferase-isomerase.